The primary structure comprises 298 residues: Homoserine kinase (298 aa).

79–89 contributes to the ATP binding site; the sequence is PIARGLGSSGA.

Belongs to the GHMP kinase family. Homoserine kinase subfamily.

Its subcellular location is the cytoplasm. It catalyses the reaction L-homoserine + ATP = O-phospho-L-homoserine + ADP + H(+). It participates in amino-acid biosynthesis; L-threonine biosynthesis; L-threonine from L-aspartate: step 4/5. Functionally, catalyzes the ATP-dependent phosphorylation of L-homoserine to L-homoserine phosphate. The chain is Homoserine kinase from Pyrobaculum islandicum (strain DSM 4184 / JCM 9189 / GEO3).